A 441-amino-acid polypeptide reads, in one-letter code: Probable acetylornithine aminotransferase, mitochondrial (441 aa).

Lys-294 carries the N6-(pyridoxal phosphate)lysine modification.

It belongs to the class-III pyridoxal-phosphate-dependent aminotransferase family. It depends on pyridoxal 5'-phosphate as a cofactor.

The protein resides in the mitochondrion matrix. It catalyses the reaction N(2)-acetyl-L-ornithine + 2-oxoglutarate = N-acetyl-L-glutamate 5-semialdehyde + L-glutamate. It participates in amino-acid biosynthesis; L-arginine biosynthesis; N(2)-acetyl-L-ornithine from L-glutamate: step 4/4. This is Probable acetylornithine aminotransferase, mitochondrial (arg1) from Schizosaccharomyces pombe (strain 972 / ATCC 24843) (Fission yeast).